The sequence spans 435 residues: Glutamyl-tRNA reductase (435 aa).

Substrate contacts are provided by residues 49–52 (TCNR), Ser109, 114–116 (EGQ), and Gln120. Cys50 functions as the Nucleophile in the catalytic mechanism. Residue 198–203 (GAGRMS) participates in NADP(+) binding.

This sequence belongs to the glutamyl-tRNA reductase family. Homodimer.

It carries out the reaction (S)-4-amino-5-oxopentanoate + tRNA(Glu) + NADP(+) = L-glutamyl-tRNA(Glu) + NADPH + H(+). It functions in the pathway porphyrin-containing compound metabolism; protoporphyrin-IX biosynthesis; 5-aminolevulinate from L-glutamyl-tRNA(Glu): step 1/2. Its pathway is porphyrin-containing compound metabolism; chlorophyll biosynthesis. In terms of biological role, catalyzes the NADPH-dependent reduction of glutamyl-tRNA(Glu) to glutamate 1-semialdehyde (GSA). The polypeptide is Glutamyl-tRNA reductase (Prochlorococcus marinus (strain MIT 9515)).